The sequence spans 956 residues: Endogenous retrovirus group K member 6 Pol protein (956 aa).

Residues L57–I245 form the Reverse transcriptase domain. An LPQG motif is present at residues L161–G164. The short motif at C195–D198 is the YXDD element. The RNase H type-1 domain maps to L460 to I590. 4 residues coordinate Mg(2+): D469, E497, D517, and D582. An Integrase-type zinc finger spans residues S587–Q628. Positions 596, 600, 624, and 627 each coordinate Zn(2+). The region spanning R642–K803 is the Integrase catalytic domain. The integrase-type DNA-binding region spans K811–E859. Residues K865–V890 form a disordered region. Over residues S869–T879 the composition is skewed to low complexity.

This sequence belongs to the beta type-B retroviral polymerase family. HERV class-II K(HML-2) pol subfamily. In terms of processing, cleavage sites that yield the mature proteins remain to be determined.

It carries out the reaction DNA(n) + a 2'-deoxyribonucleoside 5'-triphosphate = DNA(n+1) + diphosphate. The catalysed reaction is Endonucleolytic cleavage to 5'-phosphomonoester.. Early post-infection, the reverse transcriptase converts the viral RNA genome into double-stranded viral DNA. The RNase H domain of the reverse transcriptase performs two functions. It degrades the RNA template and specifically removes the RNA primer from the RNA/DNA hybrid. Following nuclear import, the integrase catalyzes the insertion of the linear, double-stranded viral DNA into the host cell chromosome. Endogenous Pol proteins may have kept, lost or modified their original function during evolution. The protein is Endogenous retrovirus group K member 6 Pol protein (ERVK-6) of Homo sapiens (Human).